The sequence spans 1520 residues: DNA-directed RNA polymerase subunit beta'' (1520 aa).

Residues Cys-220, Cys-296, Cys-303, and Cys-306 each contribute to the Zn(2+) site. Composition is skewed to basic and acidic residues over residues 645-654 (TREEEYRTRE) and 664-674 (PENKYRTREGE). Disordered stretches follow at residues 645–676 (TREEEYRTREEDSEDEYESPENKYRTREGEGE) and 705–786 (YRTL…KKEG). Acidic residues-rich tracts occupy residues 730 to 748 (GEYEILEEDSEEEYGSSED) and 756 to 779 (TLEEDSEEDSEEDSEDEYGSPEED).

Belongs to the RNA polymerase beta' chain family. RpoC2 subfamily. As to quaternary structure, in plastids the minimal PEP RNA polymerase catalytic core is composed of four subunits: alpha, beta, beta', and beta''. When a (nuclear-encoded) sigma factor is associated with the core the holoenzyme is formed, which can initiate transcription. It depends on Zn(2+) as a cofactor.

The protein localises to the plastid. The protein resides in the chloroplast. It carries out the reaction RNA(n) + a ribonucleoside 5'-triphosphate = RNA(n+1) + diphosphate. Functionally, DNA-dependent RNA polymerase catalyzes the transcription of DNA into RNA using the four ribonucleoside triphosphates as substrates. In Sorghum bicolor (Sorghum), this protein is DNA-directed RNA polymerase subunit beta''.